A 331-amino-acid polypeptide reads, in one-letter code: Lipoyl synthase (331 aa).

The disordered stretch occupies residues 1–33; it reads MSDALIASSSEAPQSPAEQYDPTRKQKSADKTA. Residues 7-19 show a composition bias toward low complexity; the sequence is ASSSEAPQSPAEQ. Over residues 21 to 33 the composition is skewed to basic and acidic residues; that stretch reads DPTRKQKSADKTA. Residues Cys78, Cys83, Cys89, Cys104, Cys108, Cys111, and Ser318 each contribute to the [4Fe-4S] cluster site. A Radical SAM core domain is found at 89–307; it reads CFGKGTATFM…EEEAYKMGFT (219 aa).

This sequence belongs to the radical SAM superfamily. Lipoyl synthase family. [4Fe-4S] cluster is required as a cofactor.

Its subcellular location is the cytoplasm. The catalysed reaction is [[Fe-S] cluster scaffold protein carrying a second [4Fe-4S](2+) cluster] + N(6)-octanoyl-L-lysyl-[protein] + 2 oxidized [2Fe-2S]-[ferredoxin] + 2 S-adenosyl-L-methionine + 4 H(+) = [[Fe-S] cluster scaffold protein] + N(6)-[(R)-dihydrolipoyl]-L-lysyl-[protein] + 4 Fe(3+) + 2 hydrogen sulfide + 2 5'-deoxyadenosine + 2 L-methionine + 2 reduced [2Fe-2S]-[ferredoxin]. Its pathway is protein modification; protein lipoylation via endogenous pathway; protein N(6)-(lipoyl)lysine from octanoyl-[acyl-carrier-protein]: step 2/2. Its function is as follows. Catalyzes the radical-mediated insertion of two sulfur atoms into the C-6 and C-8 positions of the octanoyl moiety bound to the lipoyl domains of lipoate-dependent enzymes, thereby converting the octanoylated domains into lipoylated derivatives. The chain is Lipoyl synthase from Cupriavidus pinatubonensis (strain JMP 134 / LMG 1197) (Cupriavidus necator (strain JMP 134)).